The following is a 237-amino-acid chain: Ribosomal RNA small subunit methyltransferase G (237 aa).

S-adenosyl-L-methionine-binding positions include Gly78, Phe83, 129–130 (AE), and Arg148. The tract at residues 218–237 (KKETPNKYPRKAGMPNKRPL) is disordered.

The protein belongs to the methyltransferase superfamily. RNA methyltransferase RsmG family.

The protein resides in the cytoplasm. Its function is as follows. Specifically methylates the N7 position of a guanine in 16S rRNA. This Streptococcus sanguinis (strain SK36) protein is Ribosomal RNA small subunit methyltransferase G.